The following is a 298-amino-acid chain: ATP phosphoribosyltransferase (298 aa).

This sequence belongs to the ATP phosphoribosyltransferase family. Long subfamily. Requires Mg(2+) as cofactor.

The protein resides in the cytoplasm. It carries out the reaction 1-(5-phospho-beta-D-ribosyl)-ATP + diphosphate = 5-phospho-alpha-D-ribose 1-diphosphate + ATP. It functions in the pathway amino-acid biosynthesis; L-histidine biosynthesis; L-histidine from 5-phospho-alpha-D-ribose 1-diphosphate: step 1/9. Feedback inhibited by histidine. Its function is as follows. Catalyzes the condensation of ATP and 5-phosphoribose 1-diphosphate to form N'-(5'-phosphoribosyl)-ATP (PR-ATP). Has a crucial role in the pathway because the rate of histidine biosynthesis seems to be controlled primarily by regulation of HisG enzymatic activity. This is ATP phosphoribosyltransferase from Aeromonas salmonicida (strain A449).